Consider the following 323-residue polypeptide: Mitochondrial glutamate carrier 1 (323 aa).

3 Solcar repeats span residues 6 to 93 (ISLP…FRHQ), 101 to 214 (LTLP…LNQL), and 223 to 312 (SPFY…GIAE). 6 helical membrane passes run 12–32 (LING…IDLA), 62–82 (YFGM…EKAI), 107–127 (MLAG…MEML), 189–209 (GLGA…PLFA), 223–243 (SPFY…AVAV), and 292–312 (ALVI…GIAE).

Belongs to the mitochondrial carrier (TC 2.A.29) family.

It is found in the mitochondrion inner membrane. It carries out the reaction L-glutamate(in) + H(+)(in) = L-glutamate(out) + H(+)(out). In terms of biological role, mitochondrial glutamate/H(+) symporter. Responsible for the transport of glutamate from the cytosol into the mitochondrial matrix with the concomitant import of a proton. Plays a role in the control of glucose-stimulated insulin secretion. The chain is Mitochondrial glutamate carrier 1 (Slc25a22) from Mus musculus (Mouse).